The sequence spans 315 residues: Putative peptide transport system permease protein BMEII0209 (315 aa).

Helical transmembrane passes span 13–33 (AIPVMLIVAILTFLLMKLLPG), 102–122 (LALLAFAITIPVGIIMGVVAA), 136–156 (LALLGVSVPSFWLAILAVILF), 178–198 (WLRSLILPASILALFQIGYLA), 238–258 (VSVLTVSGYIFSLLIGGSVVI), and 287–307 (MLFLGFLFVAINVLVDILYTI). Positions 96-305 (LPVTISLALL…AINVLVDILY (210 aa)) constitute an ABC transmembrane type-1 domain.

It belongs to the binding-protein-dependent transport system permease family. The complex is composed of two ATP-binding proteins (BMEII0205 and BMEII0206), two transmembrane proteins (BMEII0207/BMEII0208 and BMEII0209) and a solute-binding protein (BMEII0210).

The protein localises to the cell inner membrane. In terms of biological role, probably part of an ABC transporter complex that could be involved in peptide import. Probably responsible for the translocation of the substrate across the membrane. The sequence is that of Putative peptide transport system permease protein BMEII0209 from Brucella melitensis biotype 1 (strain ATCC 23456 / CCUG 17765 / NCTC 10094 / 16M).